Here is a 383-residue protein sequence, read N- to C-terminus: Acetylornithine deacetylase (383 aa).

Residue histidine 80 coordinates Zn(2+). Aspartate 82 is an active-site residue. Aspartate 112 serves as a coordination point for Zn(2+). The active site involves glutamate 144. Positions 145, 169, and 355 each coordinate Zn(2+).

Belongs to the peptidase M20A family. ArgE subfamily. In terms of assembly, homodimer. The cofactor is Zn(2+). Requires Co(2+) as cofactor. It depends on glutathione as a cofactor.

It localises to the cytoplasm. The catalysed reaction is N(2)-acetyl-L-ornithine + H2O = L-ornithine + acetate. Its pathway is amino-acid biosynthesis; L-arginine biosynthesis; L-ornithine from N(2)-acetyl-L-ornithine (linear): step 1/1. In terms of biological role, catalyzes the hydrolysis of the amide bond of N(2)-acetylated L-amino acids. Cleaves the acetyl group from N-acetyl-L-ornithine to form L-ornithine, an intermediate in L-arginine biosynthesis pathway, and a branchpoint in the synthesis of polyamines. The chain is Acetylornithine deacetylase from Escherichia coli (strain K12 / MC4100 / BW2952).